A 261-amino-acid chain; its full sequence is 5'-nucleotidase SurE (261 aa).

A divalent metal cation is bound by residues D10, D11, S41, and N96.

The protein belongs to the SurE nucleotidase family. A divalent metal cation is required as a cofactor.

It localises to the cytoplasm. It carries out the reaction a ribonucleoside 5'-phosphate + H2O = a ribonucleoside + phosphate. In terms of biological role, nucleotidase that shows phosphatase activity on nucleoside 5'-monophosphates. This Methanococcoides burtonii (strain DSM 6242 / NBRC 107633 / OCM 468 / ACE-M) protein is 5'-nucleotidase SurE.